A 487-amino-acid chain; its full sequence is Glycogen synthase 1 (487 aa).

K15 is a binding site for ADP-alpha-D-glucose.

Belongs to the glycosyltransferase 1 family. Bacterial/plant glycogen synthase subfamily.

The catalysed reaction is [(1-&gt;4)-alpha-D-glucosyl](n) + ADP-alpha-D-glucose = [(1-&gt;4)-alpha-D-glucosyl](n+1) + ADP + H(+). The protein operates within glycan biosynthesis; glycogen biosynthesis. Its function is as follows. Synthesizes alpha-1,4-glucan chains using ADP-glucose. This chain is Glycogen synthase 1, found in Nitrosococcus oceani (strain ATCC 19707 / BCRC 17464 / JCM 30415 / NCIMB 11848 / C-107).